We begin with the raw amino-acid sequence, 423 residues long: Gamma-glutamyl phosphate reductase (423 aa).

This sequence belongs to the gamma-glutamyl phosphate reductase family.

It localises to the cytoplasm. The enzyme catalyses L-glutamate 5-semialdehyde + phosphate + NADP(+) = L-glutamyl 5-phosphate + NADPH + H(+). Its pathway is amino-acid biosynthesis; L-proline biosynthesis; L-glutamate 5-semialdehyde from L-glutamate: step 2/2. Its function is as follows. Catalyzes the NADPH-dependent reduction of L-glutamate 5-phosphate into L-glutamate 5-semialdehyde and phosphate. The product spontaneously undergoes cyclization to form 1-pyrroline-5-carboxylate. The protein is Gamma-glutamyl phosphate reductase of Pseudomonas fluorescens (strain Pf0-1).